A 597-amino-acid polypeptide reads, in one-letter code: Arginine--tRNA ligase (597 aa).

Residues 124 to 134 (PNVAKPLHVGH) carry the 'HIGH' region motif.

Belongs to the class-I aminoacyl-tRNA synthetase family. In terms of assembly, monomer.

Its subcellular location is the cytoplasm. It catalyses the reaction tRNA(Arg) + L-arginine + ATP = L-arginyl-tRNA(Arg) + AMP + diphosphate. In Agathobacter rectalis (strain ATCC 33656 / DSM 3377 / JCM 17463 / KCTC 5835 / VPI 0990) (Eubacterium rectale), this protein is Arginine--tRNA ligase.